Here is a 576-residue protein sequence, read N- to C-terminus: Aspartate--tRNA ligase (576 aa).

An L-aspartate-binding site is contributed by Glu-170. The interval 194-197 (QLFK) is aspartate. Arg-216 contacts L-aspartate. ATP-binding positions include 216-218 (RDE) and Gln-225. His-438 serves as a coordination point for L-aspartate. Glu-471 is a binding site for ATP. An L-aspartate-binding site is contributed by Arg-478. 523–526 (GLDR) lines the ATP pocket.

The protein belongs to the class-II aminoacyl-tRNA synthetase family. Type 1 subfamily. In terms of assembly, homodimer.

It is found in the cytoplasm. The enzyme catalyses tRNA(Asp) + L-aspartate + ATP = L-aspartyl-tRNA(Asp) + AMP + diphosphate. Catalyzes the attachment of L-aspartate to tRNA(Asp) in a two-step reaction: L-aspartate is first activated by ATP to form Asp-AMP and then transferred to the acceptor end of tRNA(Asp). The sequence is that of Aspartate--tRNA ligase from Fervidobacterium nodosum (strain ATCC 35602 / DSM 5306 / Rt17-B1).